The chain runs to 431 residues: Glutamate-1-semialdehyde 2,1-aminomutase 2 (431 aa).

Residue lysine 268 is modified to N6-(pyridoxal phosphate)lysine.

Belongs to the class-III pyridoxal-phosphate-dependent aminotransferase family. HemL subfamily. In terms of assembly, homodimer. The cofactor is pyridoxal 5'-phosphate.

It is found in the cytoplasm. It carries out the reaction (S)-4-amino-5-oxopentanoate = 5-aminolevulinate. It participates in porphyrin-containing compound metabolism; protoporphyrin-IX biosynthesis; 5-aminolevulinate from L-glutamyl-tRNA(Glu): step 2/2. In Bacillus licheniformis (strain ATCC 14580 / DSM 13 / JCM 2505 / CCUG 7422 / NBRC 12200 / NCIMB 9375 / NCTC 10341 / NRRL NRS-1264 / Gibson 46), this protein is Glutamate-1-semialdehyde 2,1-aminomutase 2.